The following is a 565-amino-acid chain: Hemagglutinin-neuraminidase (565 aa).

At 1 to 19 (MVAEDAPVRATCRVLFRTT) the chain is on the intravirion side. Residues 20–40 (TLIFLCTLLALSISILYESLI) traverse the membrane as a helical segment. The Virion surface portion of the chain corresponds to 41–565 (TQKQIMSQAG…VPFIRQVTLS (525 aa)). N139 carries N-linked (GlcNAc...) asparagine; by host glycosylation. Intrachain disulfides connect C161–C185, C175–C236, and C227–C240. The tract at residues 223–228 (NRKSCS) is involved in neuraminidase activity. N-linked (GlcNAc...) asparagine; by host glycosylation occurs at N267. Cystine bridges form between C333–C454, C365–C375, and C448–C458. Residue N504 is glycosylated (N-linked (GlcNAc...) asparagine; by host). The cysteines at positions 528 and 539 are disulfide-linked.

The protein belongs to the paramyxoviruses hemagglutinin-neuraminidase family. Homotetramer; composed of disulfide-linked homodimers. Interacts with F protein trimer.

The protein localises to the virion membrane. Its subcellular location is the host cell membrane. It carries out the reaction Hydrolysis of alpha-(2-&gt;3)-, alpha-(2-&gt;6)-, alpha-(2-&gt;8)- glycosidic linkages of terminal sialic acid residues in oligosaccharides, glycoproteins, glycolipids, colominic acid and synthetic substrates.. In terms of biological role, attaches the virus to sialic acid-containing cell receptors and thereby initiating infection. Binding of HN protein to the receptor induces a conformational change that allows the F protein to trigger virion/cell membranes fusion. Its function is as follows. Neuraminidase activity ensures the efficient spread of the virus by dissociating the mature virions from the neuraminic acid containing glycoproteins. This chain is Hemagglutinin-neuraminidase (HN), found in Canis lupus familiaris (Dog).